We begin with the raw amino-acid sequence, 885 residues long: Glycerol-3-phosphate acyltransferase (885 aa).

A compositionally biased stretch (pro residues) spans 1–17 (MPEQNPLPFPDGQPSPP). The segment at 1 to 26 (MPEQNPLPFPDGQPSPPSTAAADTGA) is disordered. Residues 362–367 (HRSHMD) carry the HXXXXD motif motif.

Belongs to the GPAT/DAPAT family.

It localises to the cell inner membrane. It catalyses the reaction sn-glycerol 3-phosphate + an acyl-CoA = a 1-acyl-sn-glycero-3-phosphate + CoA. The protein operates within phospholipid metabolism; CDP-diacylglycerol biosynthesis; CDP-diacylglycerol from sn-glycerol 3-phosphate: step 1/3. The chain is Glycerol-3-phosphate acyltransferase from Xanthomonas axonopodis pv. citri (strain 306).